The following is an 804-amino-acid chain: Leucine--tRNA ligase (804 aa).

The 'HIGH' region signature appears at 39 to 50; the sequence is PYPSGAGLHVGH. The 'KMSKS' region signature appears at 580–584; sequence KMSKS. Lys-583 contributes to the ATP binding site.

Belongs to the class-I aminoacyl-tRNA synthetase family.

The protein resides in the cytoplasm. It catalyses the reaction tRNA(Leu) + L-leucine + ATP = L-leucyl-tRNA(Leu) + AMP + diphosphate. This Mycoplasma capricolum subsp. capricolum (strain California kid / ATCC 27343 / NCTC 10154) protein is Leucine--tRNA ligase.